Reading from the N-terminus, the 104-residue chain is Large ribosomal subunit protein bL28 (104 aa).

It belongs to the bacterial ribosomal protein bL28 family.

In Wolbachia pipientis wMel, this protein is Large ribosomal subunit protein bL28.